The following is a 399-amino-acid chain: uncharacterized protein (399 aa).

It belongs to the TelA family.

This is an uncharacterized protein from Listeria monocytogenes serovar 1/2a (strain ATCC BAA-679 / EGD-e).